A 170-amino-acid polypeptide reads, in one-letter code: Nucleoside-triphosphatase THEP1 (170 aa).

ATP-binding positions include 7–14 (GMPGVGKT) and 98–105 (IIIIDELG).

This sequence belongs to the THEP1 NTPase family.

The catalysed reaction is a ribonucleoside 5'-triphosphate + H2O = a ribonucleoside 5'-diphosphate + phosphate + H(+). Has nucleotide phosphatase activity towards ATP, GTP, CTP, TTP and UTP. May hydrolyze nucleoside diphosphates with lower efficiency. This is Nucleoside-triphosphatase THEP1 from Methanocaldococcus jannaschii (strain ATCC 43067 / DSM 2661 / JAL-1 / JCM 10045 / NBRC 100440) (Methanococcus jannaschii).